A 455-amino-acid polypeptide reads, in one-letter code: MSFLIDSSIMITSQILFFGFGWLFFMRQLFKDYEVRQYVVQVIFSVTFAFSCTMFELIIFEILGVLNSSSRYFHWKLNLCVILLILVFMVPFYIGYFIVSNIQLLHKQRLLFSCLLWLTFMYFFWKLGDPFPILSPKHGILSIEQLISRVGVIGVTLMALLSGFGAVNCPYTYMSYFLRNVTDTDILALERRLLQTMDMIISKKKRMAVARRTMFQRGDVQNKPSGLWGMLKSVTASAPGSENLTLIQQEVDALEELSRQLFLETADLYATKERIEYSKTFKGKYFNFLGYFFSIYCVWKIFMATINIVLDRVGKTDPVTRGIEITVNYLGIQFDVKFWSQHISFILVGIIIVTSIRGLLITLTKFFYAISSSKSSNVIVLLLAQIMGMYFVSSVLLIRMSMPPEYRTIITEVLGELQFNFYHRWFDVIFLVSALSSILFLYLAHKQAPEKHMAP.

5 helical membrane-spanning segments follow: residues 5-25, 46-66, 79-99, 114-134, and 150-170; these read IDSSIMITSQILFFGFGWLFF, VTFAFSCTMFELIIFEILGVL, LCVILLILVFMVPFYIGYFIV, CLLWLTFMYFFWKLGDPFPIL, and VGVIGVTLMALLSGFGAVNCP. The N-linked (GlcNAc...) asparagine glycan is linked to asparagine 180. The next 4 helical transmembrane spans lie at 288-308, 343-363, 378-398, and 425-445; these read FLGYFFSIYCVWKIFMATINI, ISFILVGIIIVTSIRGLLITL, VIVLLLAQIMGMYFVSSVLLI, and WFDVIFLVSALSSILFLYLAH.

This sequence belongs to the Golgi pH regulator (TC 1.A.38) family. As to quaternary structure, homotrimer. Interacts with RABL3; the interaction stabilizes GPR89.

Its subcellular location is the golgi apparatus membrane. The catalysed reaction is iodide(out) = iodide(in). The enzyme catalyses chloride(in) = chloride(out). It catalyses the reaction bromide(in) = bromide(out). It carries out the reaction fluoride(in) = fluoride(out). Its function is as follows. Voltage-gated channel that enables the transfer of monoatomic anions such as iodide, chloride, bromide and fluoride which may function in counter-ion conductance and participates in Golgi acidification. Plays a role in lymphocyte development, probably by acting as a RABL3 effector in hematopoietic cells. The polypeptide is Golgi pH regulator (Mus musculus (Mouse)).